A 126-amino-acid polypeptide reads, in one-letter code: MALSKEDILNAIAEMSVMDVVELVEAMEEKFGVSAAAAVAVAAPAAGDAGAAAAEEQTEFDVVLASAGEKKVNVIKAVRAITGLGLKEAKAMVDGAPSTVKEALSKDDAEAAKKELEEAGATVELK.

Belongs to the bacterial ribosomal protein bL12 family. Homodimer. Part of the ribosomal stalk of the 50S ribosomal subunit. Forms a multimeric L10(L12)X complex, where L10 forms an elongated spine to which 2 to 4 L12 dimers bind in a sequential fashion. Binds GTP-bound translation factors.

In terms of biological role, forms part of the ribosomal stalk which helps the ribosome interact with GTP-bound translation factors. Is thus essential for accurate translation. The protein is Large ribosomal subunit protein bL12 of Teredinibacter turnerae (strain ATCC 39867 / T7901).